Reading from the N-terminus, the 307-residue chain is MENKSKYKTIDHVLCVEGNKKIHVWETLPEENSPKRKNTIIIASGFARRMDHFAGLAEYLSRNGFHVIRYDSLHHVGLSSGTIDEFTMSIGKQSLLAVVDWLNTRKINNRGILASSLSARIVYASLSEINVSFLITAVGVVNLRYTLERALGFDYLSLPINELPNNLDFEGHKLGAEVFARDCLDFGWEDLTSTINSMMYLDIPFIAFTANNDNWVKQDEVITLLSNIRSNRCKIYSLLGSSHDLGENLVVLRNFYQSVTKAAIAMDNDRLDIDVDIIEPSFEHLTIATVNERRMKIEIENQAISLS.

Residues Ser-116, Asp-213, and His-243 each act as charge relay system in the active site.

Belongs to the LuxD family.

It functions in the pathway lipid metabolism; fatty acid reduction for biolumincescence. In terms of biological role, acyl transferase is part of the fatty acid reductase system required for aldehyde biosynthesis; it produces fatty acids for the luminescent reaction. The chain is Acyl transferase from Photorhabdus laumondii subsp. laumondii (strain DSM 15139 / CIP 105565 / TT01) (Photorhabdus luminescens subsp. laumondii).